The chain runs to 183 residues: Threonylcarbamoyl-AMP synthase (183 aa).

Residues 1–183 (MNREQIADAL…LRTNQLFRQG (183 aa)) form the YrdC-like domain.

The protein belongs to the SUA5 family. TsaC subfamily.

The protein localises to the cytoplasm. The catalysed reaction is L-threonine + hydrogencarbonate + ATP = L-threonylcarbamoyladenylate + diphosphate + H2O. In terms of biological role, required for the formation of a threonylcarbamoyl group on adenosine at position 37 (t(6)A37) in tRNAs that read codons beginning with adenine. Catalyzes the conversion of L-threonine, HCO(3)(-)/CO(2) and ATP to give threonylcarbamoyl-AMP (TC-AMP) as the acyladenylate intermediate, with the release of diphosphate. This is Threonylcarbamoyl-AMP synthase from Haemophilus influenzae (strain ATCC 51907 / DSM 11121 / KW20 / Rd).